Reading from the N-terminus, the 265-residue chain is uncharacterized protein (265 aa).

Residues 1-21 (MAFNNSTIIIIIVIAFAFFLI) traverse the membrane as a helical segment. Residues Asn-74 and Asn-142 are each glycosylated (N-linked (GlcNAc...) asparagine; by host).

The protein localises to the host membrane. Its subcellular location is the virion. This is an uncharacterized protein from Acanthamoeba polyphaga mimivirus (APMV).